Consider the following 305-residue polypeptide: UDP-3-O-acyl-N-acetylglucosamine deacetylase (305 aa).

Zn(2+) is bound by residues His-79, His-238, and Asp-242. His-265 acts as the Proton donor in catalysis.

The protein belongs to the LpxC family. The cofactor is Zn(2+).

It catalyses the reaction a UDP-3-O-[(3R)-3-hydroxyacyl]-N-acetyl-alpha-D-glucosamine + H2O = a UDP-3-O-[(3R)-3-hydroxyacyl]-alpha-D-glucosamine + acetate. Its pathway is glycolipid biosynthesis; lipid IV(A) biosynthesis; lipid IV(A) from (3R)-3-hydroxytetradecanoyl-[acyl-carrier-protein] and UDP-N-acetyl-alpha-D-glucosamine: step 2/6. Its function is as follows. Catalyzes the hydrolysis of UDP-3-O-myristoyl-N-acetylglucosamine to form UDP-3-O-myristoylglucosamine and acetate, the committed step in lipid A biosynthesis. This chain is UDP-3-O-acyl-N-acetylglucosamine deacetylase, found in Haemophilus influenzae (strain PittGG).